The following is a 371-amino-acid chain: Gustatory receptor-like 65a (371 aa).

Residues 1-13 (MREVNLLNRFTRQ) are Cytoplasmic-facing. Residues 14–34 (FLFLIVLVTQICGVATFVYNS) traverse the membrane as a helical segment. Topologically, residues 35-42 (KAQCFRQS) are extracellular. A helical membrane pass occupies residues 43 to 63 (GFLRFYSSLVLIFLALFLIVT). The Cytoplasmic portion of the chain corresponds to 64 to 72 (TSKMFHNLQ). A helical membrane pass occupies residues 73 to 93 (AVWPYVVGSVIILVVRIHGLL). Over 94–126 (ESAEIVELLNQMLRIMRQVNLMARHPNLFRLKH) the chain is Extracellular. Residues 127-147 (LLLLLLALQNLLRSLNTIVGI) form a helical membrane-spanning segment. Topologically, residues 148–161 (SNHSAEAYDSFLNS) are cytoplasmic. A helical membrane pass occupies residues 162-182 (VILLIILAVLLSFLLQITINI). Topologically, residues 183–251 (CLFVVLIATY…FHITVRIIRH (69 aa)) are extracellular. Residues 252–272 (FRFHWLCAIIYGLLPFFSLTA) traverse the membrane as a helical segment. The Cytoplasmic portion of the chain corresponds to 273 to 277 (KDQNG). Residues 278-298 (FNFLIISALNIIFQWTIFAIL) traverse the membrane as a helical segment. The Extracellular segment spans residues 299–371 (SRESRITRSL…FVNRLEYLHI (73 aa)).

The protein localises to the cell membrane. This chain is Gustatory receptor-like 65a, found in Drosophila melanogaster (Fruit fly).